The primary structure comprises 160 residues: Endoribonuclease YbeY (160 aa).

Residues His112, His116, and His122 each coordinate Zn(2+). Positions 141 to 160 (ELGHPDPYACDDEEPPSKEK) are disordered.

Belongs to the endoribonuclease YbeY family. It depends on Zn(2+) as a cofactor.

Its subcellular location is the cytoplasm. Single strand-specific metallo-endoribonuclease involved in late-stage 70S ribosome quality control and in maturation of the 3' terminus of the 16S rRNA. The polypeptide is Endoribonuclease YbeY (Pseudomonas paraeruginosa (strain DSM 24068 / PA7) (Pseudomonas aeruginosa (strain PA7))).